The following is a 287-amino-acid chain: Large ribosomal subunit protein uL2 (287 aa).

The interval 221 to 287 is disordered; it reads RGSVMNPCDH…SKRSRGGRDS (67 aa). A compositionally biased stretch (basic residues) spans 258-287; sequence KTRKRNKPSNRFVLRKRRRTSKRSRGGRDS.

It belongs to the universal ribosomal protein uL2 family. As to quaternary structure, part of the 50S ribosomal subunit. Forms a bridge to the 30S subunit in the 70S ribosome.

One of the primary rRNA binding proteins. Required for association of the 30S and 50S subunits to form the 70S ribosome, for tRNA binding and peptide bond formation. It has been suggested to have peptidyltransferase activity; this is somewhat controversial. Makes several contacts with the 16S rRNA in the 70S ribosome. This is Large ribosomal subunit protein uL2 from Prochlorococcus marinus (strain MIT 9313).